The following is a 490-amino-acid chain: POC1 centriolar protein homolog B (490 aa).

WD repeat units lie at residues glycine 16–arginine 55, glycine 58–valine 97, alanine 100–serine 139, arginine 142–isoleucine 181, aspartate 184–histidine 223, valine 226–threonine 265, and glycine 268–arginine 307. The span at aspartate 375 to methionine 388 shows a compositional bias: polar residues. The interval aspartate 375 to serine 427 is disordered. Positions serine 431–threonine 463 form a coiled coil.

It belongs to the WD repeat POC1 family.

The protein resides in the cytoplasm. It localises to the cytoskeleton. Its subcellular location is the microtubule organizing center. The protein localises to the centrosome. It is found in the centriole. In terms of biological role, plays an important role in centriole assembly and/or stability and ciliogenesis. Involved in early steps of centriole duplication, as well as in the later steps of centriole length control. This chain is POC1 centriolar protein homolog B, found in Danio rerio (Zebrafish).